The primary structure comprises 118 residues: MTDLIPLEQAHCLPRKGSDHKLGEARLAELLPQVPGWELAEAGMAITRTFRFADYYRTLAFVNALAWIAHREDHHPDLGVHYDRVVVRYSTHDVGGLSENDFICAAKVAQLFDQGITA.

It belongs to the pterin-4-alpha-carbinolamine dehydratase family.

The catalysed reaction is (4aS,6R)-4a-hydroxy-L-erythro-5,6,7,8-tetrahydrobiopterin = (6R)-L-erythro-6,7-dihydrobiopterin + H2O. This is Putative pterin-4-alpha-carbinolamine dehydratase from Xanthomonas campestris pv. campestris (strain 8004).